A 3479-amino-acid polypeptide reads, in one-letter code: Abnormal spindle-like microcephaly-associated protein homolog (3479 aa).

Positions 1 to 29 (MANRRVGRGCWEVSPTERRPPAALRGPAT) are disordered. Residues Ser-280, Ser-283, Ser-367, Ser-392, Ser-425, and Ser-605 each carry the phosphoserine modification. The Calponin-homology (CH) 1 domain occupies 920 to 1056 (KASKEILLAF…LLWKIAFAFQ (137 aa)). A coiled-coil region spans residues 1057-1078 (VDISLNLDQLKEEIAFLKHTKS). Position 1103 is a phosphoserine (Ser-1103). The Calponin-homology (CH) 2 domain occupies 1110 to 1261 (SENIKLLMDW…YLSFLCARLL (152 aa)). IQ domains are found at residues 1347-1378 (QNKA…IILQ), 1393-1422 (YLWA…MLKS), 1582-1613 (LKKT…VIIQ), 1605-1634 (MKKA…KTRS), 1632-1661 (TRSA…SVIK), 1655-1684 (ILTS…TTIK), 1728-1757 (MRES…AVIS), 1751-1782 (QRKA…MVIQ), 1801-1830 (VKKA…AALK), 1824-1853 (QSIA…SIIK), 1874-1903 (TKAA…AALK), 1897-1928 (EHQA…LVIQ), 1947-1978 (LRHA…IIIQ), 1970-2001 (QHKC…LLIQ), 2020-2049 (TKAA…AAVT), 2043-2074 (CNKA…IIIQ), 2093-2124 (LKKT…TFIK), 2116-2147 (MHRA…IVIQ), 2239-2270 (LRHS…TLIQ), 2262-2293 (MHVA…VWIQ), 2311-2342 (VQNA…TFIQ), 2334-2365 (MHRA…VVIQ), 2384-2415 (QRRS…TLIQ), 2407-2438 (MHSS…IFVQ), 2533-2564 (QWHS…IIIQ), 2627-2656 (QHQA…TVVS), 2668-2699 (RTQA…TLIQ), 2691-2722 (MHRA…VVIQ), 2741-2770 (VQKS…EKMA), 2817-2848 (QSRA…RIQF), 2862-2893 (QKRA…VVLQ), 2912-2941 (IRSS…STIK), 2935-2966 (IKNS…KIQA), 2957-2988 (KVKA…KIIQ), 3032-3063 (RHRA…LIIQ), 3082-3113 (FKKS…RLLH), and 3206-3237 (FTSG…IRLS).

Its subcellular location is the cytoplasm. The protein resides in the cytoskeleton. The protein localises to the spindle. It is found in the nucleus. Functionally, probable role in mitotic spindle regulation and coordination of mitotic processes. May have a preferential role in regulating neurogenesis. The protein is Abnormal spindle-like microcephaly-associated protein homolog (ASPM) of Macaca mulatta (Rhesus macaque).